Consider the following 1168-residue polypeptide: TBC1 domain family member 1 (1168 aa).

At Ser146 the chain carries Phosphoserine. The tract at residues 203–238 (VSGSRGSESPRPNPPHAAPTGSQEPVRRPMRKSFSQ) is disordered. Ser235 bears the Phosphoserine; by PKB/AKT1 mark. Ser237 bears the Phosphoserine mark. A PID domain is found at 246-404 (FRKELQDGGL…LHKLCERIEG (159 aa)). The residue at position 503 (Ser503) is a Phosphoserine. Thr505 is subject to Phosphothreonine; by PKB/AKT1. Phosphoserine is present on residues Ser507, Ser525, and Ser527. Residues 532–542 (SSLSSTLSNTS) are compositionally biased toward low complexity. Disordered regions lie at residues 532–551 (SSLS…CEKE) and 564–587 (GSSE…LSPQ). Phosphoserine occurs at positions 565, 566, 570, 571, and 585. Thr596 is subject to Phosphothreonine. At Ser614 the chain carries Phosphoserine. The residue at position 627 (Ser627) is a Phosphoserine; by PKB/AKT1. Disordered regions lie at residues 628–658 (VSTE…KTRR) and 678–717 (SSSR…KRTS). Over residues 632–645 (TPHERKDFESKANH) the composition is skewed to basic and acidic residues. A phosphoserine mark is found at Ser695 and Ser941. The Rab-GAP TBC domain occupies 800–994 (GVPRHHRGEI…RVFDMIFLQG (195 aa)). Tyr952 is modified (phosphotyrosine). The residue at position 1131 (Thr1131) is a Phosphothreonine. Over residues 1145–1159 (ELRRRSAEPSDREPE) the composition is skewed to basic and acidic residues. Residues 1145–1168 (ELRRRSAEPSDREPECTQPEPTGD) form a disordered region.

In terms of assembly, interacts with APPL2 (via BAR domain); interaction is dependent of TBC1D1 phosphorylation at Ser-235; interaction diminishes the phosphorylation of TBC1D1 at Thr-596, resulting in inhibition of SLC2A4/GLUT4 translocation and glucose uptake. Post-translationally, insulin-stimulated phosphorylation by AKT family kinases stimulates SLC2A4/GLUT4 translocation.

Its subcellular location is the nucleus. Functionally, may act as a GTPase-activating protein for Rab family protein(s). May play a role in the cell cycle and differentiation of various tissues. Involved in the trafficking and translocation of GLUT4-containing vesicles and insulin-stimulated glucose uptake into cells. The protein is TBC1 domain family member 1 (TBC1D1) of Homo sapiens (Human).